A 141-amino-acid polypeptide reads, in one-letter code: Sec-independent protein translocase protein TatB (141 aa).

The chain crosses the membrane as a helical span at residues 2-22 (FANVGWGEMLVLVIAGLVILG). A disordered region spans residues 92–141 (IFTGRFDSTSSDQPGSGKPPKPQSGPGPAAASGPAATTTPASTPFDPDAT). Over residues 117 to 141 (PGPAAASGPAATTTPASTPFDPDAT) the composition is skewed to low complexity.

The protein belongs to the TatB family. The Tat system comprises two distinct complexes: a TatABC complex, containing multiple copies of TatA, TatB and TatC subunits, and a separate TatA complex, containing only TatA subunits. Substrates initially bind to the TatABC complex, which probably triggers association of the separate TatA complex to form the active translocon.

It localises to the cell membrane. Its function is as follows. Part of the twin-arginine translocation (Tat) system that transports large folded proteins containing a characteristic twin-arginine motif in their signal peptide across membranes. Together with TatC, TatB is part of a receptor directly interacting with Tat signal peptides. TatB may form an oligomeric binding site that transiently accommodates folded Tat precursor proteins before their translocation. The protein is Sec-independent protein translocase protein TatB of Mycolicibacterium gilvum (strain PYR-GCK) (Mycobacterium gilvum (strain PYR-GCK)).